A 602-amino-acid polypeptide reads, in one-letter code: 4-hydroxy-3-methylbut-2-en-1-yl diphosphate synthase (flavodoxin) (602 aa).

The [4Fe-4S] cluster site is built by C508, C511, C543, and E550.

It belongs to the IspG family. [4Fe-4S] cluster serves as cofactor.

The catalysed reaction is (2E)-4-hydroxy-3-methylbut-2-enyl diphosphate + oxidized [flavodoxin] + H2O + 2 H(+) = 2-C-methyl-D-erythritol 2,4-cyclic diphosphate + reduced [flavodoxin]. It participates in isoprenoid biosynthesis; isopentenyl diphosphate biosynthesis via DXP pathway; isopentenyl diphosphate from 1-deoxy-D-xylulose 5-phosphate: step 5/6. In terms of biological role, converts 2C-methyl-D-erythritol 2,4-cyclodiphosphate (ME-2,4cPP) into 1-hydroxy-2-methyl-2-(E)-butenyl 4-diphosphate. The protein is 4-hydroxy-3-methylbut-2-en-1-yl diphosphate synthase (flavodoxin) of Chlamydia trachomatis serovar L2b (strain UCH-1/proctitis).